Consider the following 60-residue polypeptide: Cytotoxin 10 (60 aa).

4 disulfides stabilise this stretch: C3–C21, C14–C38, C42–C53, and C54–C59.

Belongs to the three-finger toxin family. Short-chain subfamily. Type IA cytotoxin sub-subfamily. In terms of assembly, monomer in solution; Homodimer and oligomer in the presence of negatively charged lipids forming a pore with a size ranging between 20 and 30 Angstroms. In terms of tissue distribution, expressed by the venom gland.

The protein localises to the secreted. It localises to the target cell membrane. In terms of biological role, shows cytolytic activity on many different cells by forming pore in lipid membranes. In vivo, increases heart rate or kills the animal by cardiac arrest. In addition, it binds to heparin with high affinity, interacts with Kv channel-interacting protein 1 (KCNIP1) in a calcium-independent manner, and binds to integrin alpha-V/beta-3 (ITGAV/ITGB3) with moderate affinity. Has hemolytic activity towards human erythrocytes (EC(50)=0.162 uM) and cytolytic activity towards various cell lines. The protein is Cytotoxin 10 of Naja naja (Indian cobra).